Here is a 937-residue protein sequence, read N- to C-terminus: Outer membrane usher protein CS3-2 (937 aa).

This sequence belongs to the fimbrial export usher family. Post-translationally, a 97 kDa form of the protein is thought to be due to post-translational processing of isoform 104 kDa.

The protein resides in the cell outer membrane. Functionally, these proteins are essential for the biogenesis of mature CS3 pili, but not for synthesis of the CS3 pilin subunit. In Escherichia coli, this protein is Outer membrane usher protein CS3-2.